Consider the following 246-residue polypeptide: Putative S-adenosyl-L-methionine-dependent methyltransferase Mflv_0168 (246 aa).

S-adenosyl-L-methionine is bound by residues aspartate 112 and 141 to 142; that span reads DL.

It belongs to the UPF0677 family.

Exhibits S-adenosyl-L-methionine-dependent methyltransferase activity. The polypeptide is Putative S-adenosyl-L-methionine-dependent methyltransferase Mflv_0168 (Mycolicibacterium gilvum (strain PYR-GCK) (Mycobacterium gilvum (strain PYR-GCK))).